Here is a 66-residue protein sequence, read N- to C-terminus: Large ribosomal subunit protein uL29 (66 aa).

The protein belongs to the universal ribosomal protein uL29 family.

This chain is Large ribosomal subunit protein uL29, found in Thermotoga sp. (strain RQ2).